Reading from the N-terminus, the 727-residue chain is Glucans biosynthesis glucosyltransferase H (727 aa).

The segment at 18–45 (SAMPNERPGAMEPQSLTEMPEGFPRRST) is disordered. 7 consecutive transmembrane segments (helical) span residues 58–78 (FFVV…MGAV), 90–110 (LVLL…CSGI), 278–298 (LQQF…GWWV), 408–428 (IMAY…LMLA), 460–480 (LFYI…LLLL), 496–516 (IFSV…MMFI), and 572–592 (LLAW…ISAW).

The protein belongs to the glycosyltransferase 2 family. OpgH subfamily.

The protein resides in the cell inner membrane. The protein operates within glycan metabolism; osmoregulated periplasmic glucan (OPG) biosynthesis. Involved in the biosynthesis of osmoregulated periplasmic glucans (OPGs). This Shewanella putrefaciens (strain CN-32 / ATCC BAA-453) protein is Glucans biosynthesis glucosyltransferase H.